The chain runs to 158 residues: Non-secretory ribonuclease (158 aa).

The signal sequence occupies residues 1-27 (MVPKLFTSQICVLLLFGLLSVEVSLQV). Trp34 is a glycosylation site (C-linked (Man) tryptophan). His42 acts as the Proton acceptor in catalysis. 4 cysteine pairs are disulfide-bonded: Cys50/Cys110, Cys64/Cys121, Cys82/Cys136, and Cys89/Cys98. Tyr60 bears the 3'-nitrotyrosine mark. Substrate is bound at residue 65–69 (KNQNT). Asn86, Asn92, and Asn111 each carry an N-linked (GlcNAc...) asparagine glycan. The active-site Proton donor is the His153.

Belongs to the pancreatic ribonuclease family. As to quaternary structure, interacts with and forms a tight 1:1 complex with RNH1. Dimerization of two such complexes may occur.

Its subcellular location is the lysosome. The protein resides in the cytoplasmic granule. It catalyses the reaction an [RNA] containing cytidine + H2O = an [RNA]-3'-cytidine-3'-phosphate + a 5'-hydroxy-ribonucleotide-3'-[RNA].. The enzyme catalyses an [RNA] containing uridine + H2O = an [RNA]-3'-uridine-3'-phosphate + a 5'-hydroxy-ribonucleotide-3'-[RNA].. Its function is as follows. This is a non-secretory ribonuclease. It is a pyrimidine specific nuclease with a slight preference for U. Cytotoxin and helminthotoxin. Possesses a wide variety of biological activities. The polypeptide is Non-secretory ribonuclease (RNASE2) (Saguinus oedipus (Cotton-top tamarin)).